Here is a 553-residue protein sequence, read N- to C-terminus: Phosphoenolpyruvate carboxykinase (ATP) (553 aa).

The tract at residues methionine 1–threonine 22 is disordered. Glycine 255 to threonine 262 is a binding site for ATP.

The protein belongs to the phosphoenolpyruvate carboxykinase (ATP) family.

The catalysed reaction is oxaloacetate + ATP = phosphoenolpyruvate + ADP + CO2. It functions in the pathway carbohydrate biosynthesis; gluconeogenesis. The chain is Phosphoenolpyruvate carboxykinase (ATP) (PCK1) from Candida albicans (Yeast).